A 196-amino-acid chain; its full sequence is MPIGVPKVPFRSPGEEDASWVDVYNRLYRERLLFLGQEVDSEISNQLIGLMVYLSIEDDTKDLYLFINSPGGWVIPGVAIYDTMQFVRPDVHTICMGLAASMGSFILVGGEITKRLAFPHARVMIHQPASSFYEAQTGEFLLEAEELLKLRETLTKVYGQRTGKPLWVVSEDMERDVFMSATEAQAHGIIDLVAVE.

Catalysis depends on serine 101, which acts as the Nucleophile. Histidine 126 is a catalytic residue.

This sequence belongs to the peptidase S14 family. Component of the chloroplastic Clp protease core complex.

It is found in the plastid. The protein localises to the chloroplast stroma. The enzyme catalyses Hydrolysis of proteins to small peptides in the presence of ATP and magnesium. alpha-casein is the usual test substrate. In the absence of ATP, only oligopeptides shorter than five residues are hydrolyzed (such as succinyl-Leu-Tyr-|-NHMec, and Leu-Tyr-Leu-|-Tyr-Trp, in which cleavage of the -Tyr-|-Leu- and -Tyr-|-Trp bonds also occurs).. Its function is as follows. Cleaves peptides in various proteins in a process that requires ATP hydrolysis. Has a chymotrypsin-like activity. Plays a major role in the degradation of misfolded proteins. The protein is ATP-dependent Clp protease proteolytic subunit of Spinacia oleracea (Spinach).